The following is a 162-amino-acid chain: Ribosome maturation factor RimP (162 aa).

Belongs to the RimP family.

It localises to the cytoplasm. Functionally, required for maturation of 30S ribosomal subunits. The sequence is that of Ribosome maturation factor RimP from Streptococcus gordonii (strain Challis / ATCC 35105 / BCRC 15272 / CH1 / DL1 / V288).